The chain runs to 148 residues: Large ribosomal subunit protein bL9 (148 aa).

The protein belongs to the bacterial ribosomal protein bL9 family.

Binds to the 23S rRNA. In Bifidobacterium adolescentis (strain ATCC 15703 / DSM 20083 / NCTC 11814 / E194a), this protein is Large ribosomal subunit protein bL9.